A 328-amino-acid polypeptide reads, in one-letter code: Bidirectional sugar transporter SWEET16 (328 aa).

At 1 to 5 (MADPS) the chain is on the extracellular side. A helical membrane pass occupies residues 6–26 (FFVGIVGNVISILVFASPIAT). Positions 6 to 92 (FFVGIVGNVI…TLYLAYAPRE (87 aa)) constitute a MtN3/slv 1 domain. Over 27–38 (FRRIVRSKSTEE) the chain is Cytoplasmic. The helical transmembrane segment at 39–56 (FRWLPYVTTLLSTSLWTF) threads the bilayer. The Extracellular portion of the chain corresponds to 57-63 (YGLHKPG). A helical membrane pass occupies residues 64 to 84 (GLLIVTVNGSGAALEAIYVTL). The Cytoplasmic portion of the chain corresponds to 85 to 99 (YLAYAPRETKAKMVK). Residues 100–120 (VVLAVNVGALAAVVAVALVAL) form a helical membrane-spanning segment. At 121 to 125 (HGGVR) the chain is on the extracellular side. Residues 126–146 (LFVVGVLCAALTIGMYAAPMA) traverse the membrane as a helical segment. The MtN3/slv 2 domain maps to 127–213 (FVVGVLCAAL…LYMAYRRTKK (87 aa)). The Cytoplasmic portion of the chain corresponds to 147 to 161 (AMRTVVKTRSVEYMP). A helical membrane pass occupies residues 162 to 182 (FSLSFFLFLNGGVWSVYSLLV). Topologically, residues 183-185 (KDY) are extracellular. A helical membrane pass occupies residues 186-206 (FIGIPNAIGFALGTAQLALYM). At 207 to 328 (AYRRTKKPAG…ATTAGPGDRH (122 aa)) the chain is on the cytoplasmic side. The segment covering 288 to 299 (HQHHGGHHHHHR) has biased composition (basic residues). The tract at residues 288–328 (HQHHGGHHHHHRFDTVPDDDDEAVAAGGTTPATTAGPGDRH) is disordered. The segment covering 312–328 (AAGGTTPATTAGPGDRH) has biased composition (low complexity).

Belongs to the SWEET sugar transporter family. Forms homooligomers and/or heterooligomers.

The protein localises to the cell membrane. Its function is as follows. Mediates both low-affinity uptake and efflux of sugar across the plasma membrane. The chain is Bidirectional sugar transporter SWEET16 (SWEET16) from Oryza sativa subsp. japonica (Rice).